Reading from the N-terminus, the 35-residue chain is uncharacterized protein (35 aa).

The first 25 residues, 1–25 (MTERKLLQLLRRPFISLSLFTALRA), serve as a signal peptide directing secretion.

This is an uncharacterized protein from Saccharomyces cerevisiae (strain ATCC 204508 / S288c) (Baker's yeast).